A 154-amino-acid chain; its full sequence is 6,7-dimethyl-8-ribityllumazine synthase (154 aa).

Residues Phe15, Thr47–Asp49, and Ala71–Ile73 each bind 5-amino-6-(D-ribitylamino)uracil. Glu76–Thr77 is a (2S)-2-hydroxy-3-oxobutyl phosphate binding site. His79 serves as the catalytic Proton donor. 5-amino-6-(D-ribitylamino)uracil is bound at residue Leu104. Residue Arg119 participates in (2S)-2-hydroxy-3-oxobutyl phosphate binding.

It belongs to the DMRL synthase family.

It catalyses the reaction (2S)-2-hydroxy-3-oxobutyl phosphate + 5-amino-6-(D-ribitylamino)uracil = 6,7-dimethyl-8-(1-D-ribityl)lumazine + phosphate + 2 H2O + H(+). It participates in cofactor biosynthesis; riboflavin biosynthesis; riboflavin from 2-hydroxy-3-oxobutyl phosphate and 5-amino-6-(D-ribitylamino)uracil: step 1/2. Catalyzes the formation of 6,7-dimethyl-8-ribityllumazine by condensation of 5-amino-6-(D-ribitylamino)uracil with 3,4-dihydroxy-2-butanone 4-phosphate. This is the penultimate step in the biosynthesis of riboflavin. The sequence is that of 6,7-dimethyl-8-ribityllumazine synthase from Saccharolobus solfataricus (strain ATCC 35092 / DSM 1617 / JCM 11322 / P2) (Sulfolobus solfataricus).